The primary structure comprises 97 residues: YcgL domain-containing protein CKO_01183 (97 aa).

The YcgL domain occupies 1–85 (MFCVIYRSSK…PPEDLLKQHL (85 aa)). The segment at 74 to 97 (PPPPEDLLKQHLSAPGENKPDAKS) is disordered.

This Citrobacter koseri (strain ATCC BAA-895 / CDC 4225-83 / SGSC4696) protein is YcgL domain-containing protein CKO_01183.